The primary structure comprises 346 residues: Transcription termination factor 4, mitochondrial (346 aa).

The transit peptide at Met-1–Lys-42 directs the protein to the mitochondrion. 5 MTERF repeats span residues Phe-142–Gly-172, Lys-177–Lys-204, Ala-209–Phe-239, His-245–Arg-270, and Leu-290–Lys-318. Residues Val-310–Glu-327 form a dimerization with NSUN4 region. Residues Asp-321–Leu-346 form a disordered region. Residues Gln-322–Leu-346 are compositionally biased toward acidic residues.

The protein belongs to the mTERF family. In terms of assembly, heterodimer with NSUN4; this interaction may be required for NSUN4 recruitment to the mitochondrial large ribosomal subunit. As to expression, widely expressed, with highest levels in liver, followed by testis, kidney and brain.

It is found in the mitochondrion. Functionally, regulator of mitochondrial ribosome biogenesis and translation. Binds to mitochondrial ribosomal RNAs 16S, 12S and 7S. Targets NSUN4 RNA methyltransferase to the mitochondrial large ribosomal subunit. The chain is Transcription termination factor 4, mitochondrial (Mterf4) from Mus musculus (Mouse).